A 149-amino-acid chain; its full sequence is 3-dehydroquinate dehydratase (149 aa).

Tyrosine 23 serves as the catalytic Proton acceptor. Residues asparagine 75, histidine 81, and aspartate 88 each coordinate substrate. Histidine 101 (proton donor) is an active-site residue. Substrate-binding positions include 102–103 (MS) and arginine 112.

It belongs to the type-II 3-dehydroquinase family. Homododecamer.

The enzyme catalyses 3-dehydroquinate = 3-dehydroshikimate + H2O. Its pathway is metabolic intermediate biosynthesis; chorismate biosynthesis; chorismate from D-erythrose 4-phosphate and phosphoenolpyruvate: step 3/7. Catalyzes a trans-dehydration via an enolate intermediate. The chain is 3-dehydroquinate dehydratase from Pelobacter propionicus (strain DSM 2379 / NBRC 103807 / OttBd1).